The chain runs to 757 residues: Protein Lines homolog 1 (757 aa).

At Ser635 the chain carries Phosphoserine.

It belongs to the protein lines family. Expressed in adult testis, prostate, prostate, spleen, thymus, skeletal muscle, fetal kidney and brain.

This chain is Protein Lines homolog 1, found in Homo sapiens (Human).